Consider the following 356-residue polypeptide: 7,8-didemethyl-8-hydroxy-5-deazariboflavin synthase (356 aa).

Residues Ile-40–Asn-280 form the Radical SAM core domain. [4Fe-4S] cluster-binding residues include Cys-54, Cys-58, and Cys-61.

It belongs to the radical SAM superfamily. CofG family. Consists of two subunits, CofG and CofH. [4Fe-4S] cluster serves as cofactor.

The enzyme catalyses 5-amino-5-(4-hydroxybenzyl)-6-(D-ribitylimino)-5,6-dihydrouracil + S-adenosyl-L-methionine = 7,8-didemethyl-8-hydroxy-5-deazariboflavin + 5'-deoxyadenosine + L-methionine + NH4(+) + H(+). Its pathway is cofactor biosynthesis; coenzyme F0 biosynthesis. Functionally, catalyzes the radical-mediated synthesis of 7,8-didemethyl-8-hydroxy-5-deazariboflavin from 5-amino-5-(4-hydroxybenzyl)-6-(D-ribitylimino)-5,6-dihydrouracil. This chain is 7,8-didemethyl-8-hydroxy-5-deazariboflavin synthase, found in Methanococcus aeolicus (strain ATCC BAA-1280 / DSM 17508 / OCM 812 / Nankai-3).